A 405-amino-acid chain; its full sequence is Tryptophan synthase beta chain (405 aa).

K98 is subject to N6-(pyridoxal phosphate)lysine.

The protein belongs to the TrpB family. Tetramer of two alpha and two beta chains. Pyridoxal 5'-phosphate is required as a cofactor.

The catalysed reaction is (1S,2R)-1-C-(indol-3-yl)glycerol 3-phosphate + L-serine = D-glyceraldehyde 3-phosphate + L-tryptophan + H2O. The protein operates within amino-acid biosynthesis; L-tryptophan biosynthesis; L-tryptophan from chorismate: step 5/5. The beta subunit is responsible for the synthesis of L-tryptophan from indole and L-serine. This chain is Tryptophan synthase beta chain, found in Xanthomonas euvesicatoria pv. vesicatoria (strain 85-10) (Xanthomonas campestris pv. vesicatoria).